We begin with the raw amino-acid sequence, 118 residues long: Large ribosomal subunit protein uL18 (118 aa).

This sequence belongs to the universal ribosomal protein uL18 family. As to quaternary structure, part of the 50S ribosomal subunit; part of the 5S rRNA/L5/L18/L25 subcomplex. Contacts the 5S and 23S rRNAs.

This is one of the proteins that bind and probably mediate the attachment of the 5S RNA into the large ribosomal subunit, where it forms part of the central protuberance. In Helicobacter hepaticus (strain ATCC 51449 / 3B1), this protein is Large ribosomal subunit protein uL18.